The primary structure comprises 76 residues: MDQEQLFDKLYSLNLQLTAKNDQKKRKPVFYPEWEKDPTDTNDDVYYGLRYKPEAKKTLRSTWMQSEFESHRSSSA.

This is an uncharacterized protein from Ornithodoros (relapsing fever ticks).